Here is a 204-residue protein sequence, read N- to C-terminus: Somatotropin (204 aa).

Residues 1–17 (MDRAILLLSVLSVGVSS) form the signal peptide. Q18 is modified (pyrrolidone carboxylic acid). H35 is a Zn(2+) binding site. C69 and C177 are joined by a disulfide. E186 contacts Zn(2+). Cysteines 194 and 202 form a disulfide.

This sequence belongs to the somatotropin/prolactin family.

Its subcellular location is the secreted. Its function is as follows. Growth hormone plays an important role in growth control and is involved in the regulation of several anabolic processes. Implicated as an osmoregulatory substance important for seawater adaptation. This Dicentrarchus labrax (European seabass) protein is Somatotropin (gh).